The following is a 181-amino-acid chain: Large ribosomal subunit protein uL5 (181 aa).

Belongs to the universal ribosomal protein uL5 family. Part of the 50S ribosomal subunit; part of the 5S rRNA/L5/L18/L25 subcomplex. Contacts the 5S rRNA and the P site tRNA. Forms a bridge to the 30S subunit in the 70S ribosome.

Functionally, this is one of the proteins that bind and probably mediate the attachment of the 5S RNA into the large ribosomal subunit, where it forms part of the central protuberance. In the 70S ribosome it contacts protein S13 of the 30S subunit (bridge B1b), connecting the 2 subunits; this bridge is implicated in subunit movement. Contacts the P site tRNA; the 5S rRNA and some of its associated proteins might help stabilize positioning of ribosome-bound tRNAs. This chain is Large ribosomal subunit protein uL5, found in Colwellia psychrerythraea (strain 34H / ATCC BAA-681) (Vibrio psychroerythus).